We begin with the raw amino-acid sequence, 450 residues long: Chromosomal replication initiator protein DnaA (450 aa).

The domain I, interacts with DnaA modulators stretch occupies residues 1-79 (MKDSYFDLNT…MEYAYDVAHD (79 aa)). The interval 79 to 112 (DFFKPELKVIKVVANPVNNQKSNQSNSDFVATDY) is domain II. The tract at residues 113–329 (QLNQNFTFDT…GAFNTLTLMA (217 aa)) is domain III, AAA+ region. 4 residues coordinate ATP: glycine 157, glycine 159, lysine 160, and threonine 161. A domain IV, binds dsDNA region spans residues 330–450 (RAGRPINVSN…NLSTKIKEKS (121 aa)).

It belongs to the DnaA family. Oligomerizes as a right-handed, spiral filament on DNA at oriC.

The protein resides in the cytoplasm. In terms of biological role, plays an essential role in the initiation and regulation of chromosomal replication. ATP-DnaA binds to the origin of replication (oriC) to initiate formation of the DNA replication initiation complex once per cell cycle. Binds the DnaA box (a 9 base pair repeat at the origin) and separates the double-stranded (ds)DNA. Forms a right-handed helical filament on oriC DNA; dsDNA binds to the exterior of the filament while single-stranded (ss)DNA is stabiized in the filament's interior. The ATP-DnaA-oriC complex binds and stabilizes one strand of the AT-rich DNA unwinding element (DUE), permitting loading of DNA polymerase. After initiation quickly degrades to an ADP-DnaA complex that is not apt for DNA replication. Binds acidic phospholipids. The sequence is that of Chromosomal replication initiator protein DnaA from Oenococcus oeni (strain ATCC BAA-331 / PSU-1).